A 558-amino-acid polypeptide reads, in one-letter code: Polypeptide N-acetylgalactosaminyltransferase 16 (558 aa).

Residues 1–6 lie on the Cytoplasmic side of the membrane; it reads MRKIRA. A helical; Signal-anchor for type II membrane protein transmembrane segment spans residues 7–26; sequence NAIAILTVAWILGTFYYLWQ. Residues 27–558 are Lumenal-facing; sequence DNRAHAASSG…AQQWQLLPHT (532 aa). The tract at residues 33–54 is disordered; sequence ASSGGRGAQRAGRRSEQLREDR. Positions 45-54 are enriched in basic and acidic residues; it reads RRSEQLREDR. 5 disulfide bridges follow: C113–C340, C331–C409, C441–C460, C486–C506, and C530–C543. The tract at residues 122–227 is catalytic subdomain A; that stretch reads LPATSVIITF…TEWLPPMLQR (106 aa). Substrate-binding residues include D163 and R188. D211 is a Mn(2+) binding site. S212 contributes to the substrate binding site. H213 is a Mn(2+) binding site. The tract at residues 286–348 is catalytic subdomain B; it reads PIRTPVIAGG…PCSRVGHVFR (63 aa). W317 is a substrate binding site. H345 is a binding site for Mn(2+). Positions 348, 351, and 353 each coordinate substrate. One can recognise a Ricin B-type lectin domain in the interval 428-555; sequence KEALPGIIKQ…DAQAQQWQLL (128 aa).

The protein belongs to the glycosyltransferase 2 family. GalNAc-T subfamily. Mn(2+) serves as cofactor.

Its subcellular location is the golgi apparatus membrane. The enzyme catalyses L-seryl-[protein] + UDP-N-acetyl-alpha-D-galactosamine = a 3-O-[N-acetyl-alpha-D-galactosaminyl]-L-seryl-[protein] + UDP + H(+). It carries out the reaction L-threonyl-[protein] + UDP-N-acetyl-alpha-D-galactosamine = a 3-O-[N-acetyl-alpha-D-galactosaminyl]-L-threonyl-[protein] + UDP + H(+). It functions in the pathway protein modification; protein glycosylation. Its function is as follows. Catalyzes the initial reaction in O-linked oligosaccharide biosynthesis, the transfer of an N-acetyl-D-galactosamine residue to a serine or threonine residue on the protein receptor. This is Polypeptide N-acetylgalactosaminyltransferase 16 (GALNT16) from Homo sapiens (Human).